A 163-amino-acid chain; its full sequence is Probable ribosome biogenesis protein RLP24 (163 aa).

The protein belongs to the eukaryotic ribosomal protein eL24 family. As to quaternary structure, associated with nucleolar and cytoplasmic pre-60S particles. At the end of biogenesis it dissociates from cytoplasmic pre-60S particles and is likely to be exchanged for its ribosomal homolog, RPL24.

It is found in the nucleus. The protein localises to the nucleolus. Its function is as follows. Involved in the biogenesis of the 60S ribosomal subunit. Ensures the docking of GTPBP4/NOG1 to pre-60S particles. This chain is Probable ribosome biogenesis protein RLP24 (RSL24D1), found in Bos taurus (Bovine).